A 335-amino-acid polypeptide reads, in one-letter code: tRNA N6-adenosine threonylcarbamoyltransferase (335 aa).

The Fe cation site is built by histidine 110 and histidine 114. Substrate contacts are provided by residues 132–136 (LVSGG), aspartate 165, glycine 178, and asparagine 271. Aspartate 299 contacts Fe cation.

Belongs to the KAE1 / TsaD family. Requires Fe(2+) as cofactor.

Its subcellular location is the cytoplasm. It catalyses the reaction L-threonylcarbamoyladenylate + adenosine(37) in tRNA = N(6)-L-threonylcarbamoyladenosine(37) in tRNA + AMP + H(+). Its function is as follows. Required for the formation of a threonylcarbamoyl group on adenosine at position 37 (t(6)A37) in tRNAs that read codons beginning with adenine. Is involved in the transfer of the threonylcarbamoyl moiety of threonylcarbamoyl-AMP (TC-AMP) to the N6 group of A37, together with TsaE and TsaB. TsaD likely plays a direct catalytic role in this reaction. In Campylobacter jejuni subsp. jejuni serotype O:23/36 (strain 81-176), this protein is tRNA N6-adenosine threonylcarbamoyltransferase.